Reading from the N-terminus, the 314-residue chain is MPFSEPGKTKFQVDLRRHLRNQGICDNLVHLICEIAEASKYVINAVRTGDLGVAGTSNLYGEEQLALDVLSDRIIKKRLIHSGVVCNIASEEMDEIFQAQADADGLYSVAYDPLDGSSLVDVNLAVGTIVSIYEGCNLLQKGRNQVAALYILYGPRVSMVYSVGRGVHEFTMNHLMEFTLSRENIVMQEEGNIYAPGGLRNKYQEGTEQFVRYLEEKGAKLRYSGGFVPDINQVIMKGKGIFMYPALNGSPNGKLRLLFELNAMAYLVENAGGAATDGKQPILDLEPHSLDQRAPVYIGCKADVVKAMEFVSRN.

Positions 91, 112, 114, and 115 each coordinate Mg(2+). Substrate is bound by residues 115 to 118 (DGSS), tyrosine 223, and lysine 254. Glutamate 260 provides a ligand contact to Mg(2+).

Belongs to the FBPase class 1 family. As to quaternary structure, homotetramer. Mg(2+) is required as a cofactor.

The protein resides in the cytoplasm. It carries out the reaction beta-D-fructose 1,6-bisphosphate + H2O = beta-D-fructose 6-phosphate + phosphate. It functions in the pathway carbohydrate biosynthesis; gluconeogenesis. This is Fructose-1,6-bisphosphatase class 1 from Geobacter metallireducens (strain ATCC 53774 / DSM 7210 / GS-15).